Consider the following 659-residue polypeptide: UvrABC system protein B (659 aa).

Residues 27 to 414 (EGLEQNKKSQ…AHGEIVKQII (388 aa)) form the Helicase ATP-binding domain. Residue 40-47 (GVTGSGKT) participates in ATP binding. Residues 93 to 116 (YFDYYRPEAYMPNTDTYIDKTTKS) carry the Beta-hairpin motif. The 163-residue stretch at 432 to 594 (QVEDMFDEIQ…IIPKTIIKPI (163 aa)) folds into the Helicase C-terminal domain. The region spanning 624 to 659 (EALVKDLRNQMLDASKQLNFERAAELRDIILELEAN) is the UVR domain.

Belongs to the UvrB family. As to quaternary structure, forms a heterotetramer with UvrA during the search for lesions. Interacts with UvrC in an incision complex.

It is found in the cytoplasm. In terms of biological role, the UvrABC repair system catalyzes the recognition and processing of DNA lesions. A damage recognition complex composed of 2 UvrA and 2 UvrB subunits scans DNA for abnormalities. Upon binding of the UvrA(2)B(2) complex to a putative damaged site, the DNA wraps around one UvrB monomer. DNA wrap is dependent on ATP binding by UvrB and probably causes local melting of the DNA helix, facilitating insertion of UvrB beta-hairpin between the DNA strands. Then UvrB probes one DNA strand for the presence of a lesion. If a lesion is found the UvrA subunits dissociate and the UvrB-DNA preincision complex is formed. This complex is subsequently bound by UvrC and the second UvrB is released. If no lesion is found, the DNA wraps around the other UvrB subunit that will check the other stand for damage. In Mycoplasma mobile (strain ATCC 43663 / 163K / NCTC 11711) (Mesomycoplasma mobile), this protein is UvrABC system protein B.